Reading from the N-terminus, the 747-residue chain is ESX-1 secretion system protein EccCa1 (747 aa).

3 helical membrane-spanning segments follow: residues 41 to 61 (ILPYVMGGAMLGMIAIMVAGG), 65 to 85 (LSPYMLMMPLMMIVMMVGGLA), and 222 to 242 (FPTIAIGGDLAGAAGLMTAMI). Residues 456-665 (GNVMYLDIKE…LRTTSSHESK (210 aa)) enclose the FtsK domain. 479–486 (GTTGSGKS) is a binding site for ATP.

Part of the ESX-1 / type VII secretion system (T7SS), which is composed of cytosolic and membrane components. The ESX-1 membrane complex is composed of EccB1, EccCa1, EccCb1, EccD1 and EccE1.

It is found in the cell inner membrane. In terms of biological role, part of the ESX-1 specialized secretion system, which delivers several virulence factors to host cells during infection, including the key virulence factors EsxA (ESAT-6) and EsxB (CFP-10). The sequence is that of ESX-1 secretion system protein EccCa1 from Mycobacterium tuberculosis (strain CDC 1551 / Oshkosh).